The primary structure comprises 484 residues: Chromosomal replication initiator protein DnaA (484 aa).

A domain I, interacts with DnaA modulators region spans residues 1–73; it reads MQEGKNIWSL…EILIEKGHNT (73 aa). The segment at 73–140 is domain II; it reads TINVEFINSP…EEIHTKYRNP (68 aa). Positions 141–357 are domain III, AAA+ region; that stretch reads FLKKKYTFEN…AAVTKLKAHI (217 aa). ATP is bound by residues Gly185, Gly187, Lys188, and Thr189. The tract at residues 358–484 is domain IV, binds dsDNA; it reads DLEDIEIDTS…IELMNKINKK (127 aa).

This sequence belongs to the DnaA family. As to quaternary structure, oligomerizes as a right-handed, spiral filament on DNA at oriC.

It localises to the cytoplasm. Functionally, plays an essential role in the initiation and regulation of chromosomal replication. ATP-DnaA binds to the origin of replication (oriC) to initiate formation of the DNA replication initiation complex once per cell cycle. Binds the DnaA box (a 9 base pair repeat at the origin) and separates the double-stranded (ds)DNA. Forms a right-handed helical filament on oriC DNA; dsDNA binds to the exterior of the filament while single-stranded (ss)DNA is stabiized in the filament's interior. The ATP-DnaA-oriC complex binds and stabilizes one strand of the AT-rich DNA unwinding element (DUE), permitting loading of DNA polymerase. After initiation quickly degrades to an ADP-DnaA complex that is not apt for DNA replication. Binds acidic phospholipids. The chain is Chromosomal replication initiator protein DnaA from Borrelia hermsii (strain HS1 / DAH).